The chain runs to 271 residues: Phosphatidylglycerol--prolipoprotein diacylglyceryl transferase (271 aa).

The next 7 helical transmembrane spans lie at 25–45 (WYGIMYVIALLLALLLAKFFV), 60–80 (YFIWVEIGVILGARLGYILIY), 103–123 (FVGIRGMSYHGAIIGFLIATL), 134–154 (WIFLDLVALSVPLAYVFGRIG), 181–201 (PSQLYEAFLEGIVVFIIVYLA), 209–229 (GELILVYAGAYSLARFICEFY), and 235–255 (GIGFVLWGMSMGQILSFIMFI). Arg152 serves as a coordination point for a 1,2-diacyl-sn-glycero-3-phospho-(1'-sn-glycerol).

Belongs to the Lgt family.

The protein localises to the cell inner membrane. It carries out the reaction L-cysteinyl-[prolipoprotein] + a 1,2-diacyl-sn-glycero-3-phospho-(1'-sn-glycerol) = an S-1,2-diacyl-sn-glyceryl-L-cysteinyl-[prolipoprotein] + sn-glycerol 1-phosphate + H(+). The protein operates within protein modification; lipoprotein biosynthesis (diacylglyceryl transfer). Its function is as follows. Catalyzes the transfer of the diacylglyceryl group from phosphatidylglycerol to the sulfhydryl group of the N-terminal cysteine of a prolipoprotein, the first step in the formation of mature lipoproteins. The protein is Phosphatidylglycerol--prolipoprotein diacylglyceryl transferase of Campylobacter jejuni subsp. jejuni serotype O:6 (strain 81116 / NCTC 11828).